The following is a 180-amino-acid chain: Inner membrane-spanning protein YciB (180 aa).

5 helical membrane passes run 25-45 (QNAT…CYVI), 49-69 (VSKL…ITLI), 76-96 (IKIK…MSGI), 118-138 (IILS…NEIV), and 150-170 (FKVF…LPLL).

Belongs to the YciB family.

The protein localises to the cell inner membrane. Plays a role in cell envelope biogenesis, maintenance of cell envelope integrity and membrane homeostasis. The sequence is that of Inner membrane-spanning protein YciB from Rickettsia felis (strain ATCC VR-1525 / URRWXCal2) (Rickettsia azadi).